We begin with the raw amino-acid sequence, 110 residues long: Large ribosomal subunit protein P2C (110 aa).

Residues Ala83–Asp110 are disordered. Residues Lys95 to Met104 show a composition bias toward acidic residues. At Ser100 the chain carries Phosphoserine.

Belongs to the eukaryotic ribosomal protein P1/P2 family. Component of the large ribosomal subunit (LSU). Mature yeast ribosomes consist of a small (40S) and a large (60S) subunit. The 40S small subunit contains 1 molecule of ribosomal RNA (18S rRNA) and at least 33 different proteins. The large 60S subunit contains 3 rRNA molecules (25S, 5.8S and 5S rRNA) and at least 46 different proteins. The acidic ribosomal P-proteins form the stalk structure of the 60S subunit. They are organized as a pentameric complex in which uL10/P0 interacts with 2 heterodimers of P1 and P2 proteins.

The protein resides in the cytoplasm. In terms of biological role, component of the ribosome, a large ribonucleoprotein complex responsible for the synthesis of proteins in the cell. The small ribosomal subunit (SSU) binds messenger RNAs (mRNAs) and translates the encoded message by selecting cognate aminoacyl-transfer RNA (tRNA) molecules. The large subunit (LSU) contains the ribosomal catalytic site termed the peptidyl transferase center (PTC), which catalyzes the formation of peptide bonds, thereby polymerizing the amino acids delivered by tRNAs into a polypeptide chain. The nascent polypeptides leave the ribosome through a tunnel in the LSU and interact with protein factors that function in enzymatic processing, targeting, and the membrane insertion of nascent chains at the exit of the ribosomal tunnel. The chain is Large ribosomal subunit protein P2C (rpp203) from Schizosaccharomyces pombe (strain 972 / ATCC 24843) (Fission yeast).